Consider the following 573-residue polypeptide: DNA ligase (573 aa).

Residue Glu250 coordinates ATP. The active-site N6-AMP-lysine intermediate is Lys252. The ATP site is built by Arg257, Arg272, Glu301, Phe342, Arg432, and Lys438.

Belongs to the ATP-dependent DNA ligase family. The cofactor is Mg(2+).

It catalyses the reaction ATP + (deoxyribonucleotide)n-3'-hydroxyl + 5'-phospho-(deoxyribonucleotide)m = (deoxyribonucleotide)n+m + AMP + diphosphate.. Its function is as follows. DNA ligase that seals nicks in double-stranded DNA during DNA replication, DNA recombination and DNA repair. In Methanococcus maripaludis (strain C6 / ATCC BAA-1332), this protein is DNA ligase.